Here is a 907-residue protein sequence, read N- to C-terminus: Interference hedgehog (907 aa).

An N-terminal signal peptide occupies residues 1 to 23 (MSLTRRFSLTLLLLLPLLTSLLA). Topologically, residues 24 to 709 (AIPVLQANLS…SHNETFNMNP (686 aa)) are extracellular. Ig-like C2-type domains lie at 42–149 (PGVR…ASIS), 152–233 (GADT…VRLA), 252–340 (PALL…FIEL), and 346–433 (PRIL…LQVN). Disulfide bonds link cysteine 65–cysteine 127, cysteine 173–cysteine 221, and cysteine 276–cysteine 324. N-linked (GlcNAc...) asparagine glycosylation is found at asparagine 101, asparagine 203, asparagine 300, and asparagine 355. The cysteines at positions 367 and 415 are disulfide-linked. The disordered stretch occupies residues 427-474 (GTLLQVNPKQLPDGEGTGMDSGRSSARPTHSRKQKQQTQMVPPSAPNV). Residues 462 to 474 (QQTQMVPPSAPNV) are compositionally biased toward polar residues. Fibronectin type-III domains lie at 468-578 (PPSA…LQRG) and 586-681 (VPEL…TQRP). Residue asparagine 473 is glycosylated (N-linked (GlcNAc...) asparagine). Residues arginine 504, lysine 511, and lysine 513 each contribute to the heparin site. N-linked (GlcNAc...) asparagine glycans are attached at residues asparagine 537 and asparagine 548. Arginine 552 serves as a coordination point for heparin. An N-linked (GlcNAc...) asparagine glycan is attached at asparagine 568. Positions 676–688 (GRTQRPRASSTPQ) are enriched in polar residues. Residues 676 to 701 (GRTQRPRASSTPQPVLHAVDTTTPSH) are disordered. Asparagine 702 carries an N-linked (GlcNAc...) asparagine glycan. The chain crosses the membrane as a helical span at residues 710-730 (MLTGTIGGGALLVLLVISACL). The Cytoplasmic segment spans residues 731-907 (CLCRRRSSRG…SSGSLNSVGV (177 aa)). Disordered stretches follow at residues 780 to 805 (AQQQ…QDND) and 829 to 881 (MSSS…NKPG). Composition is skewed to low complexity over residues 781–794 (QQQQ…LQQQ) and 853–863 (NNNNLNQPGDG). The span at 865–878 (LANSADSPRLQASN) shows a compositional bias: polar residues.

The protein belongs to the immunoglobulin superfamily. IHOG family. Homodimer. Heterotetramer; 2 iHog chains bind 2 hh chains when facilitated by heparin, heparin is required to promote high-affinity interactions between hh and iHog.

The protein localises to the membrane. Functionally, mediates response to the active Hedgehog (Hh) protein signal in embryos, functioning upstream or at the level of patched (ptc). This chain is Interference hedgehog, found in Drosophila virilis (Fruit fly).